The following is a 218-amino-acid chain: Ras-related protein R-Ras (218 aa).

Positions 1 to 30 (MSSGAASGTGRGRPRGGGPGPRDPPPGETH) are disordered. The span at 7 to 20 (SGTGRGRPRGGGPG) shows a compositional bias: gly residues. 36–44 (GGGGVGKSA) provides a ligand contact to GTP. Residues 58-66 (YDPTIEDSY) carry the Effector region motif. GTP contacts are provided by residues 83 to 87 (DTAGQ), 142 to 145 (NKAD), and 172 to 174 (SAK). Cysteine methyl ester is present on Cys-215. A lipid anchor (S-geranylgeranyl cysteine) is attached at Cys-215. A propeptide spans 216–218 (VLL) (removed in mature form).

The protein belongs to the small GTPase superfamily. Ras family. As to quaternary structure, interacts with PLCE1. Interacts (active GTP-bound form preferentially) with RGS14. Interacts with OSBPL3. Interacts with ZDHHC19. Post-translationally, S-palmitoylated by ZDHHC19, leading to increased association with membranes and with rafts/caveolae as well as enhanced cell viability.

Its subcellular location is the cell membrane. The catalysed reaction is GTP + H2O = GDP + phosphate + H(+). Its function is as follows. GTP-binding protein with GTPase activity, likely involved in the regulation of MAPK signaling pathway and thereby controlling multiple cellular processes. Regulates the organization of the actin cytoskeleton. With OSPBL3, modulates integrin beta-1 (ITGB1) activity. This is Ras-related protein R-Ras (Rras) from Rattus norvegicus (Rat).